Reading from the N-terminus, the 118-residue chain is Protein BEX4 (118 aa).

A disordered region spans residues 14–50 (VEKDKKDKKGGKASKQSEEEPHHLEEVENKKPGGNVR). Residues 28–44 (KQSEEEPHHLEEVENKK) are compositionally biased toward basic and acidic residues. Residues 30 to 88 (SEEEPHHLEEVENKKPGGNVRRKVRRLVPNFLWAIPNRHVDRNEGGEDVGRFVVQGTEV) are interaction with SIRT2. The tract at residues 30–118 (SEEEPHHLEE…DNHYDFCLIP (89 aa)) is interaction with alpha-tubulin. A Zn(2+)-binding site is contributed by Cys-115.

The protein belongs to the BEX family. Interacts with alpha-tubulin. Interacts with SIRT2. Ubiquitinated and degraded by the proteasome. Expressed in both Sertoli and germ cells as well as interstitial area of the testis (at protein level).

It is found in the cytoplasm. The protein resides in the cytoskeleton. The protein localises to the spindle pole. Its subcellular location is the nucleus. May play a role in microtubule deacetylation by negatively regulating the SIRT2 deacetylase activity toward alpha-tubulin and thereby participate in the control of cell cycle progression and genomic stability. In absence of reductive stress, acts as a pseudosubstrate for the CRL2(FEM1B) complex: associates with FEM1B via zinc, thereby preventing association between FEM1B and its substrates. The sequence is that of Protein BEX4 from Mus musculus (Mouse).